Consider the following 588-residue polypeptide: Adenine deaminase (588 aa).

It belongs to the metallo-dependent hydrolases superfamily. Adenine deaminase family. In terms of assembly, homodimer. It depends on Mn(2+) as a cofactor.

It carries out the reaction adenine + H2O + H(+) = hypoxanthine + NH4(+). This chain is Adenine deaminase, found in Escherichia coli O9:H4 (strain HS).